Reading from the N-terminus, the 149-residue chain is Large ribosomal subunit protein uL13 (149 aa).

It belongs to the universal ribosomal protein uL13 family. In terms of assembly, part of the 50S ribosomal subunit.

This protein is one of the early assembly proteins of the 50S ribosomal subunit, although it is not seen to bind rRNA by itself. It is important during the early stages of 50S assembly. In Bifidobacterium longum subsp. infantis (strain ATCC 15697 / DSM 20088 / JCM 1222 / NCTC 11817 / S12), this protein is Large ribosomal subunit protein uL13.